We begin with the raw amino-acid sequence, 352 residues long: 4-hydroxy-3-methylbut-2-enyl diphosphate reductase (352 aa).

Residue Cys-36 coordinates [4Fe-4S] cluster. The (2E)-4-hydroxy-3-methylbut-2-enyl diphosphate site is built by His-76 and His-114. Dimethylallyl diphosphate contacts are provided by His-76 and His-114. Positions 76 and 114 each coordinate isopentenyl diphosphate. Residue Cys-136 coordinates [4Fe-4S] cluster. His-164 provides a ligand contact to (2E)-4-hydroxy-3-methylbut-2-enyl diphosphate. His-164 contacts dimethylallyl diphosphate. His-164 is an isopentenyl diphosphate binding site. The active-site Proton donor is Glu-166. Thr-204 lines the (2E)-4-hydroxy-3-methylbut-2-enyl diphosphate pocket. [4Fe-4S] cluster is bound at residue Cys-234. Positions 262, 263, 264, and 309 each coordinate (2E)-4-hydroxy-3-methylbut-2-enyl diphosphate. Dimethylallyl diphosphate contacts are provided by Ser-262, Ser-263, Asn-264, and Ser-309. Isopentenyl diphosphate is bound by residues Ser-262, Ser-263, Asn-264, and Ser-309.

Belongs to the IspH family. It depends on [4Fe-4S] cluster as a cofactor.

It catalyses the reaction isopentenyl diphosphate + 2 oxidized [2Fe-2S]-[ferredoxin] + H2O = (2E)-4-hydroxy-3-methylbut-2-enyl diphosphate + 2 reduced [2Fe-2S]-[ferredoxin] + 2 H(+). The catalysed reaction is dimethylallyl diphosphate + 2 oxidized [2Fe-2S]-[ferredoxin] + H2O = (2E)-4-hydroxy-3-methylbut-2-enyl diphosphate + 2 reduced [2Fe-2S]-[ferredoxin] + 2 H(+). The protein operates within isoprenoid biosynthesis; dimethylallyl diphosphate biosynthesis; dimethylallyl diphosphate from (2E)-4-hydroxy-3-methylbutenyl diphosphate: step 1/1. Its pathway is isoprenoid biosynthesis; isopentenyl diphosphate biosynthesis via DXP pathway; isopentenyl diphosphate from 1-deoxy-D-xylulose 5-phosphate: step 6/6. In terms of biological role, catalyzes the conversion of 1-hydroxy-2-methyl-2-(E)-butenyl 4-diphosphate (HMBPP) into a mixture of isopentenyl diphosphate (IPP) and dimethylallyl diphosphate (DMAPP). Acts in the terminal step of the DOXP/MEP pathway for isoprenoid precursor biosynthesis. In Bifidobacterium longum (strain NCC 2705), this protein is 4-hydroxy-3-methylbut-2-enyl diphosphate reductase.